Consider the following 109-residue polypeptide: Nucleoid-associated protein BCE_0021 (109 aa).

Belongs to the YbaB/EbfC family. As to quaternary structure, homodimer.

The protein localises to the cytoplasm. Its subcellular location is the nucleoid. Functionally, binds to DNA and alters its conformation. May be involved in regulation of gene expression, nucleoid organization and DNA protection. This is Nucleoid-associated protein BCE_0021 from Bacillus cereus (strain ATCC 10987 / NRS 248).